We begin with the raw amino-acid sequence, 173 residues long: bZIP transcription factor 44 (173 aa).

Residues 1–65 (MNNKTEMGSS…SRMRKQKHLD (65 aa)) form a disordered region. A compositionally biased stretch (low complexity) spans 8–22 (GSSTSGNCSSVSTTG). Over residues 30–41 (SDLRQRDLIDER) the composition is skewed to basic and acidic residues. The 64-residue stretch at 39 to 102 (DERKRKRKQS…VTIEAENDIL (64 aa)) folds into the bZIP domain. The segment at 41–62 (RKRKRKQSNRESARRSRMRKQK) is basic motif. The tract at residues 67–81 (LTAQVTHLRKENAQI) is leucine-zipper.

Forms heterodimers with BZIP1, BZIP9, BZIP10, BZIP25 and BZIP63. Expressed in the micropylar endosperm and radicle tip in early germinating seeds.

Its subcellular location is the nucleus. In terms of biological role, transcription factor that binds to the DNA G-box motif 5'-CACGTG-3' of MAN7 promoter. Involved in the positive regulation of seed germination through MAN7 gene activation. MAN7 is required for both, loosening of the micropylar endosperm, and rupture of the seed coat in germinating seeds. The protein is bZIP transcription factor 44 of Arabidopsis thaliana (Mouse-ear cress).